The chain runs to 186 residues: Hydra actinoporin-like toxin 5 (186 aa).

An N-terminal signal peptide occupies residues 1–20; sequence MLLYVCLVNLLLQSPSGVDS. The Cell attachment site motif lies at 158-160; that stretch reads RDG.

The protein belongs to the actinoporin family. HALT subfamily. In terms of assembly, octamer or nonamer in membranes. Monomer in the soluble state. In vitro, interacts with folate receptor alpha (of target organism).

Its subcellular location is the nematocyst. It is found in the secreted. The protein resides in the target cell membrane. Pore-forming protein that forms hydrophilic pores and causes cytolysis. Compared to equinatoxin-2 (AC P61914), it reveals lower cytolysis activity (5-12-fold difference, tested on erythrocytes), a larger pore size (probably 2-3 nm) and different affinity to membrane lipids (100-fold lower affinity to sphingomyelin). Binds to sulfatides (SFT) as well as to the two sphingolipids, lysophosphatidic acid (LPA) and sphingosine-1-phosphate (S1P). It seems to bind more strongly to LPA than to S1P and SFT. Shows cytolytic activity on HeLa cells, with a different potency than its paralogs (from most potent to less potent: HALT-4&gt;HALT-6~HALT-1&gt;HALT-3&gt;HALT-7&gt;HALT-2). Pore formation is a multi-step process that involves specific recognition of membrane lipid by a protein aromatic residues rich region, firm binding to the membrane (mainly driven by hydrophobic interactions) accompanied by the transfer of the N-terminal region to the lipid-water interface and finally pore formation after oligomerization of monomers. In vitro, binds to the folate receptor alpha (FOLR1), a GPI-anchored membrane protein that plays a major role in the uptake of folate/folic acid into cells via endocytosis, suggesting a possible involvement of this receptor in the mechanism of HALT-1-induced cell lysis. In vivo, does not cause visible paralysis in larvae of the blowfly Sarcophaga faculata, the most common arthropod prey of Hydra. The polypeptide is Hydra actinoporin-like toxin 5 (Hydra vulgaris (Hydra)).